The sequence spans 444 residues: Ribosomal protein uS12 methylthiotransferase RimO (444 aa).

An MTTase N-terminal domain is found at 6–116; the sequence is PNIGFVSLGC…VMEHVHKYVP (111 aa). [4Fe-4S] cluster is bound by residues Cys15, Cys51, Cys80, Cys148, Cys152, and Cys155. Residues 134 to 375 form the Radical SAM core domain; sequence LTPKHYAYLK…MQLQQEISAA (242 aa). The TRAM domain maps to 378–444; that stretch reads QQKIGKTWKV…ADEYDLWGTC (67 aa).

Belongs to the methylthiotransferase family. RimO subfamily. The cofactor is [4Fe-4S] cluster.

It localises to the cytoplasm. It carries out the reaction L-aspartate(89)-[ribosomal protein uS12]-hydrogen + (sulfur carrier)-SH + AH2 + 2 S-adenosyl-L-methionine = 3-methylsulfanyl-L-aspartate(89)-[ribosomal protein uS12]-hydrogen + (sulfur carrier)-H + 5'-deoxyadenosine + L-methionine + A + S-adenosyl-L-homocysteine + 2 H(+). Catalyzes the methylthiolation of an aspartic acid residue of ribosomal protein uS12. The polypeptide is Ribosomal protein uS12 methylthiotransferase RimO (Actinobacillus succinogenes (strain ATCC 55618 / DSM 22257 / CCUG 43843 / 130Z)).